We begin with the raw amino-acid sequence, 269 residues long: Formamidopyrimidine-DNA glycosylase (269 aa).

The Schiff-base intermediate with DNA role is filled by Pro-2. Glu-3 functions as the Proton donor in the catalytic mechanism. The Proton donor; for beta-elimination activity role is filled by Lys-57. The DNA site is built by His-90, Arg-109, and Lys-150. The segment at Arg-235 to Lys-269 adopts an FPG-type zinc-finger fold. Arg-259 (proton donor; for delta-elimination activity) is an active-site residue.

This sequence belongs to the FPG family. Monomer. Zn(2+) is required as a cofactor.

The enzyme catalyses Hydrolysis of DNA containing ring-opened 7-methylguanine residues, releasing 2,6-diamino-4-hydroxy-5-(N-methyl)formamidopyrimidine.. It carries out the reaction 2'-deoxyribonucleotide-(2'-deoxyribose 5'-phosphate)-2'-deoxyribonucleotide-DNA = a 3'-end 2'-deoxyribonucleotide-(2,3-dehydro-2,3-deoxyribose 5'-phosphate)-DNA + a 5'-end 5'-phospho-2'-deoxyribonucleoside-DNA + H(+). In terms of biological role, involved in base excision repair of DNA damaged by oxidation or by mutagenic agents. Acts as a DNA glycosylase that recognizes and removes damaged bases. Has a preference for oxidized purines, such as 7,8-dihydro-8-oxoguanine (8-oxoG). Has AP (apurinic/apyrimidinic) lyase activity and introduces nicks in the DNA strand. Cleaves the DNA backbone by beta-delta elimination to generate a single-strand break at the site of the removed base with both 3'- and 5'-phosphates. This chain is Formamidopyrimidine-DNA glycosylase, found in Pectobacterium carotovorum subsp. carotovorum (strain PC1).